Reading from the N-terminus, the 842-residue chain is DNA gyrase subunit A (842 aa).

The Topo IIA-type catalytic domain occupies 42-511 (LPEVRDGLKP…ADGEVSDEDL (470 aa)). Catalysis depends on tyrosine 130, which acts as the O-(5'-phospho-DNA)-tyrosine intermediate. A GyrA-box motif is present at residues 538–544 (QKRGGKG). Residues 822–842 (EDEAAESISESDADTAESPEA) are disordered.

Belongs to the type II topoisomerase GyrA/ParC subunit family. As to quaternary structure, heterotetramer, composed of two GyrA and two GyrB chains. In the heterotetramer, GyrA contains the active site tyrosine that forms a transient covalent intermediate with DNA, while GyrB binds cofactors and catalyzes ATP hydrolysis.

Its subcellular location is the cytoplasm. The enzyme catalyses ATP-dependent breakage, passage and rejoining of double-stranded DNA.. Its activity is regulated as follows. Inhibited by 4-quinoline drugs (nalidixic acid, ciprofloxacin, ofloxacin), although it is much less sensitive than the corresponding enzyme from E.coli. In terms of biological role, a type II topoisomerase that negatively supercoils closed circular double-stranded (ds) DNA in an ATP-dependent manner to modulate DNA topology and maintain chromosomes in an underwound state. Negative supercoiling favors strand separation, and DNA replication, transcription, recombination and repair, all of which involve strand separation. Also able to catalyze the interconversion of other topological isomers of dsDNA rings, including catenanes and knotted rings. Type II topoisomerases break and join 2 DNA strands simultaneously in an ATP-dependent manner. This Mycolicibacterium smegmatis (strain ATCC 700084 / mc(2)155) (Mycobacterium smegmatis) protein is DNA gyrase subunit A.